Here is a 417-residue protein sequence, read N- to C-terminus: Membrane protein UL43 (417 aa).

A disordered region spans residues 1-21 (MLRNDSHRAVSPEDGQGRVDD). 5 helical membrane passes run 57–77 (GPYA…LGFM), 90–110 (IYAW…SLGE), 119–139 (APGP…LLVL), 146–166 (LFLL…VGGL), and 175–195 (WWIG…GPGA). Residues 217–254 (AGESLSRRPPEDPERPGVPGPPSPPTPQRSHGPPADEV) form a disordered region. The segment covering 221-231 (LSRRPPEDPER) has biased composition (basic and acidic residues). The segment covering 232-243 (PGVPGPPSPPTP) has biased composition (pro residues). 5 consecutive transmembrane segments (helical) span residues 263–283 (ENVW…VKTV), 291–311 (PGPG…AVAL), 323–343 (LTDP…GLVF), 348–368 (VVVY…VLGL), and 389–409 (GLFF…CPPG).

The protein belongs to the alphaherpesvirinae HHV-1 UL43 family.

The protein localises to the membrane. In Human herpesvirus 1 (strain 17) (HHV-1), this protein is Membrane protein UL43.